Reading from the N-terminus, the 188-residue chain is Ion-translocating oxidoreductase complex subunit B (188 aa).

Residues 1 to 23 are hydrophobic; sequence MFTAIWVMVGLAIAIGLILGWSA. Positions 29–88 constitute a 4Fe-4S domain; it reads EGNPLAEKIDAILPQTQCGQCGFPGCRPYAEAIAKGEADINQCPPGGEEGVKKLAELLGV. [4Fe-4S] cluster contacts are provided by C46, C49, C54, C71, C113, C116, C119, C123, C143, C146, C149, and C153. 2 consecutive 4Fe-4S ferredoxin-type domains span residues 104 to 133 and 134 to 163; these read SVAFIDEQTCIGCTLCIQACPVDAISGAAK and QMHTIIADECTGCELCLAPCPVDCISMVPI.

Belongs to the 4Fe4S bacterial-type ferredoxin family. RnfB subfamily. The complex is composed of six subunits: RnfA, RnfB, RnfC, RnfD, RnfE and RnfG. It depends on [4Fe-4S] cluster as a cofactor.

It localises to the cell inner membrane. Its function is as follows. Part of a membrane-bound complex that couples electron transfer with translocation of ions across the membrane. The protein is Ion-translocating oxidoreductase complex subunit B of Thiobacillus denitrificans (strain ATCC 25259 / T1).